The primary structure comprises 89 residues: UPF0335 protein OCAR_5086/OCA5_c28780 (89 aa).

Belongs to the UPF0335 family.

In Afipia carboxidovorans (strain ATCC 49405 / DSM 1227 / KCTC 32145 / OM5) (Oligotropha carboxidovorans), this protein is UPF0335 protein OCAR_5086/OCA5_c28780.